Consider the following 593-residue polypeptide: A-type ATP synthase subunit A (593 aa).

236–243 (GPFGSGKT) is an ATP binding site.

The protein belongs to the ATPase alpha/beta chains family. Has multiple subunits with at least A(3), B(3), C, D, E, F, H, I and proteolipid K(x).

The protein resides in the cell membrane. The catalysed reaction is ATP + H2O + 4 H(+)(in) = ADP + phosphate + 5 H(+)(out). Component of the A-type ATP synthase that produces ATP from ADP in the presence of a proton gradient across the membrane. The A chain is the catalytic subunit. This Pyrobaculum islandicum (strain DSM 4184 / JCM 9189 / GEO3) protein is A-type ATP synthase subunit A.